Here is a 639-residue protein sequence, read N- to C-terminus: MAU2 chromatid cohesion factor homolog (639 aa).

TPR repeat units follow at residues 453–486 (GGFYYVQGLHAFHKNSFHEAKRFLRETLKMANAE) and 493–526 (SCSLVLLSHVFLSIGNSKESMNMVTPAMQLASKI).

This sequence belongs to the SCC4/mau-2 family. Interacts with Nipped-B to form the cohesin loading complex.

The protein localises to the nucleus. Its subcellular location is the nucleoplasm. Required for association of the cohesin complex with chromatin during interphase. Plays a role in sister chromatid cohesion and normal progression through prometaphase. The chain is MAU2 chromatid cohesion factor homolog from Drosophila ananassae (Fruit fly).